Reading from the N-terminus, the 446-residue chain is Histidine--tRNA ligase (446 aa).

The protein belongs to the class-II aminoacyl-tRNA synthetase family. As to quaternary structure, homodimer.

It is found in the cytoplasm. The enzyme catalyses tRNA(His) + L-histidine + ATP = L-histidyl-tRNA(His) + AMP + diphosphate + H(+). The sequence is that of Histidine--tRNA ligase from Burkholderia vietnamiensis (strain G4 / LMG 22486) (Burkholderia cepacia (strain R1808)).